The following is a 674-amino-acid chain: ATP-dependent DNA helicase Hel308 (674 aa).

Residues glutamine 27 and 44 to 51 each bind ATP; that span reads VPTAAGKT. One can recognise a Helicase ATP-binding domain in the interval 31–197; it reads IEQIRKGRNV…WLDASLIKSD (167 aa). The short motif at 142–145 is the DEAH box element; that stretch reads DEIH. The Helicase C-terminal domain maps to 224–411; the sequence is SINQIIRETV…EAKVRFNTLA (188 aa).

This sequence belongs to the helicase family. Hel308 subfamily. As to quaternary structure, monomer.

The catalysed reaction is Couples ATP hydrolysis with the unwinding of duplex DNA by translocating in the 3'-5' direction.. The enzyme catalyses ATP + H2O = ADP + phosphate + H(+). DNA-dependent ATPase and 3'-5' DNA helicase that may be involved in repair of stalled replication forks. This is ATP-dependent DNA helicase Hel308 from Thermoplasma acidophilum (strain ATCC 25905 / DSM 1728 / JCM 9062 / NBRC 15155 / AMRC-C165).